Reading from the N-terminus, the 55-residue chain is ATP synthase F(0) complex subunit 8 (55 aa).

A helical membrane pass occupies residues 4–24; the sequence is LNPAPWFAILVFSWLVFLTVI. The tract at residues 36-55 is disordered; sequence EPTSQSTEKTKPEPWNWPWH.

The protein belongs to the ATPase protein 8 family. As to quaternary structure, component of the ATP synthase complex composed at least of ATP5F1A/subunit alpha, ATP5F1B/subunit beta, ATP5MC1/subunit c (homooctomer), MT-ATP6/subunit a, MT-ATP8/subunit 8, ATP5ME/subunit e, ATP5MF/subunit f, ATP5MG/subunit g, ATP5MK/subunit k, ATP5MJ/subunit j, ATP5F1C/subunit gamma, ATP5F1D/subunit delta, ATP5F1E/subunit epsilon, ATP5PF/subunit F6, ATP5PB/subunit b, ATP5PD/subunit d, ATP5PO/subunit OSCP. ATP synthase complex consists of a soluble F(1) head domain (subunits alpha(3) and beta(3)) - the catalytic core - and a membrane F(0) domain - the membrane proton channel (subunits c, a, 8, e, f, g, k and j). These two domains are linked by a central stalk (subunits gamma, delta, and epsilon) rotating inside the F1 region and a stationary peripheral stalk (subunits F6, b, d, and OSCP).

The protein resides in the mitochondrion membrane. Functionally, subunit 8, of the mitochondrial membrane ATP synthase complex (F(1)F(0) ATP synthase or Complex V) that produces ATP from ADP in the presence of a proton gradient across the membrane which is generated by electron transport complexes of the respiratory chain. ATP synthase complex consist of a soluble F(1) head domain - the catalytic core - and a membrane F(1) domain - the membrane proton channel. These two domains are linked by a central stalk rotating inside the F(1) region and a stationary peripheral stalk. During catalysis, ATP synthesis in the catalytic domain of F(1) is coupled via a rotary mechanism of the central stalk subunits to proton translocation. In vivo, can only synthesize ATP although its ATP hydrolase activity can be activated artificially in vitro. Part of the complex F(0) domain. In Salvelinus alpinus (Arctic char), this protein is ATP synthase F(0) complex subunit 8.